A 369-amino-acid chain; its full sequence is Probable L-tyrosine/L-aspartate decarboxylase (369 aa).

Position 224 is an N6-(pyridoxal phosphate)lysine (Lys-224).

This sequence belongs to the group II decarboxylase family. MfnA subfamily. The cofactor is pyridoxal 5'-phosphate.

The catalysed reaction is L-tyrosine + H(+) = tyramine + CO2. It carries out the reaction L-aspartate + H(+) = beta-alanine + CO2. The protein operates within cofactor biosynthesis; methanofuran biosynthesis. It functions in the pathway cofactor biosynthesis; coenzyme A biosynthesis. Its function is as follows. Catalyzes the decarboxylation of L-tyrosine to produce tyramine for methanofuran biosynthesis. Can also catalyze the decarboxylation of L-aspartate to produce beta-alanine for coenzyme A (CoA) biosynthesis. The sequence is that of Probable L-tyrosine/L-aspartate decarboxylase from Methanospirillum hungatei JF-1 (strain ATCC 27890 / DSM 864 / NBRC 100397 / JF-1).